The primary structure comprises 269 residues: Glutamate racemase (269 aa).

Residues 11–12 and 43–44 each bind substrate; these read DS and YG. Residue cysteine 74 is the Proton donor/acceptor of the active site. Position 75 to 76 (75 to 76) interacts with substrate; the sequence is NT. Catalysis depends on cysteine 185, which acts as the Proton donor/acceptor. Substrate is bound at residue 186–187; the sequence is TH.

Belongs to the aspartate/glutamate racemases family.

It carries out the reaction L-glutamate = D-glutamate. It functions in the pathway cell wall biogenesis; peptidoglycan biosynthesis. In terms of biological role, provides the (R)-glutamate required for cell wall biosynthesis. In Bacillus cereus (strain G9842), this protein is Glutamate racemase.